The following is a 198-amino-acid chain: Snake venom metalloproteinase neuwiedase (198 aa).

Positions 8–198 constitute a Peptidase M12B domain; sequence RYIELVIVAD…QTFLTNHNPQ (191 aa). 2 residues coordinate Ca(2+): glutamate 11 and aspartate 95. Histidine 144 is a binding site for Zn(2+). Glutamate 145 is an active-site residue. 2 residues coordinate Zn(2+): histidine 148 and histidine 154. Cystine bridges form between cysteine 159-cysteine 183 and cysteine 161-cysteine 166.

It belongs to the venom metalloproteinase (M12B) family. P-I subfamily. Zn(2+) serves as cofactor. Expressed by the venom gland.

It localises to the secreted. With respect to regulation, inhibited by EDTA, EGTA and 1,10-phenanthroline, partially inhibited by beta-mercaptoethanol and not inhibited by serine protease inhibitors (leupeptin and aprotinin). Also inhibited by an excess of zinc, mercury and magnesium ions. Extracts of the plant Casearia mariquitensis neutralizes the decrease of platelets and plasma fibrinogen induced by the protease. The same extracts also partially inhibit Bbeta chain cleavage, but not Aalpha chain cleavage. Its function is as follows. This metalloprotease hydrolyzes the Aalpha chain of fibrin and fibrinogen first followed by the Bbeta chain and shows no effect on the gamma chain. It is also able to degrade type I collagen, fibronectin, laminin and induces inflammatory reaction. It is devoid of hemorrhagic and thrombotic activities, except in lung where it induces pulmonary bleeding. It also induces a mild myotoxic reaction. It is not able to inhibit platelet aggregation, but it induces decrease of platelets and plasma fibrinogen. It contributes to local tissue damage by inducing edema, inflammatory infiltrate and mild myotoxicity, and by degrading extracellular matrix components. The sequence is that of Snake venom metalloproteinase neuwiedase from Bothrops pauloensis (Neuwied's lancehead).